The sequence spans 700 residues: Elongation factor G (700 aa).

The tr-type G domain occupies 8-290 (DRYRNVGIMA…AMIMYMPSPL (283 aa)). Residues 17 to 24 (AHIDAGKT), 88 to 92 (DTPGH), and 142 to 145 (NKMD) contribute to the GTP site.

This sequence belongs to the TRAFAC class translation factor GTPase superfamily. Classic translation factor GTPase family. EF-G/EF-2 subfamily.

The protein localises to the cytoplasm. Catalyzes the GTP-dependent ribosomal translocation step during translation elongation. During this step, the ribosome changes from the pre-translocational (PRE) to the post-translocational (POST) state as the newly formed A-site-bound peptidyl-tRNA and P-site-bound deacylated tRNA move to the P and E sites, respectively. Catalyzes the coordinated movement of the two tRNA molecules, the mRNA and conformational changes in the ribosome. This chain is Elongation factor G, found in Vesicomyosocius okutanii subsp. Calyptogena okutanii (strain HA).